The sequence spans 130 residues: Putative F-box protein At1g77880 (130 aa).

Residues 18-64 (KVSIPYLPDDLLLNCLARISRLYYPTLSLVSKRFRSLLASTELYETR) form the F-box domain.

The chain is Putative F-box protein At1g77880 from Arabidopsis thaliana (Mouse-ear cress).